The primary structure comprises 201 residues: uncharacterized protein (201 aa).

May have a role in tissue tropism within the insect larvae. This is an uncharacterized protein from Lepidoptera (butterflies and moths).